A 392-amino-acid polypeptide reads, in one-letter code: NDP-glycosyltransferase YjiC (392 aa).

UDP is bound by residues N18, T229, S255, V278, H293, and 297 to 301 (NSTME).

The protein belongs to the UDP-glycosyltransferase family. In terms of assembly, monomer.

It carries out the reaction an NDP-glycose + an acceptor = a glycosylated acceptor + NDP.. With respect to regulation, activity is improved in the presence of Mn(2+), Mg(2+) and Ca(2+), and inhibited by Ni(2+), Zn(2+) and Cu(2+). Glycosyltransferase that can glycosylate a wide range of substrates, including various flavonoids, phenyl ketones, curcuminoid, lignins, zingerone, triterpenes, stilbene and anthraquinone, using UDP-glucose or ADP-glucose as sugar donor. It also exhibits O-, N- and S-glycosylation activities towards simple aromatics. In vivo, the broad acceptor tolerance of YjiC might function as a detoxification agent against exogenous xenobiotics to make the strain adaptable to the changeable environment. This is NDP-glycosyltransferase YjiC (yjiC) from Bacillus subtilis (strain 168).